A 1051-amino-acid chain; its full sequence is Carbamoyl phosphate synthase large chain (1051 aa).

A carboxyphosphate synthetic domain region spans residues 1–399 (MKETPKKVLV…SLQKAVRMLD (399 aa)). Residues R127, R167, G173, G174, K206, L208, E213, G239, V240, H241, Q282, and E296 each coordinate ATP. One can recognise an ATP-grasp 1 domain in the interval 131–325 (RETMIENNLP…LAYVSAKLAL (195 aa)). Mg(2+)-binding residues include Q282, E296, and N298. The Mn(2+) site is built by Q282, E296, and N298. Residues 400-548 (IGEPGVVGGK…LTYNGTEDDL (149 aa)) are oligomerization domain. The segment at 549 to 930 (EFSQGNKLLI…LKSWLSSIPN (382 aa)) is carbamoyl phosphate synthetic domain. An ATP-grasp 2 domain is found at 673–863 (SKLLDKLGIS…LINEAMKAIF (191 aa)). ATP contacts are provided by R709, K748, I750, E755, G779, V780, H781, S782, Q822, and E834. Mg(2+) contacts are provided by Q822, E834, and N836. Residues Q822, E834, and N836 each contribute to the Mn(2+) site. The 122-residue stretch at 930-1051 (NRIPNKNGIA…FEISEYGGGI (122 aa)) folds into the MGS-like domain. An allosteric domain region spans residues 931–1051 (RIPNKNGIAL…FEISEYGGGI (121 aa)).

Belongs to the CarB family. As to quaternary structure, composed of two chains; the small (or glutamine) chain promotes the hydrolysis of glutamine to ammonia, which is used by the large (or ammonia) chain to synthesize carbamoyl phosphate. Tetramer of heterodimers (alpha,beta)4. The cofactor is Mg(2+). Mn(2+) serves as cofactor.

It catalyses the reaction hydrogencarbonate + L-glutamine + 2 ATP + H2O = carbamoyl phosphate + L-glutamate + 2 ADP + phosphate + 2 H(+). The catalysed reaction is hydrogencarbonate + NH4(+) + 2 ATP = carbamoyl phosphate + 2 ADP + phosphate + 2 H(+). It participates in amino-acid biosynthesis; L-arginine biosynthesis; carbamoyl phosphate from bicarbonate: step 1/1. It functions in the pathway pyrimidine metabolism; UMP biosynthesis via de novo pathway; (S)-dihydroorotate from bicarbonate: step 1/3. Functionally, large subunit of the glutamine-dependent carbamoyl phosphate synthetase (CPSase). CPSase catalyzes the formation of carbamoyl phosphate from the ammonia moiety of glutamine, carbonate, and phosphate donated by ATP, constituting the first step of 2 biosynthetic pathways, one leading to arginine and/or urea and the other to pyrimidine nucleotides. The large subunit (synthetase) binds the substrates ammonia (free or transferred from glutamine from the small subunit), hydrogencarbonate and ATP and carries out an ATP-coupled ligase reaction, activating hydrogencarbonate by forming carboxy phosphate which reacts with ammonia to form carbamoyl phosphate. The sequence is that of Carbamoyl phosphate synthase large chain from Saccharolobus islandicus (strain L.S.2.15 / Lassen #1) (Sulfolobus islandicus).